The following is a 254-amino-acid chain: Translation initiation factor 2 subunit alpha (254 aa).

The S1 motif domain maps to 10–81; it reads GDLVVVKITE…ERKNVDLSLK (72 aa).

The protein belongs to the eIF-2-alpha family. Heterotrimer composed of an alpha, a beta and a gamma chain.

Its function is as follows. eIF-2 functions in the early steps of protein synthesis by forming a ternary complex with GTP and initiator tRNA. This Thermoplasma volcanium (strain ATCC 51530 / DSM 4299 / JCM 9571 / NBRC 15438 / GSS1) protein is Translation initiation factor 2 subunit alpha.